Reading from the N-terminus, the 207-residue chain is ATP-dependent Clp protease proteolytic subunit 2 (207 aa).

The active-site Nucleophile is the S102. The active site involves H127.

Belongs to the peptidase S14 family. Fourteen ClpP subunits assemble into 2 heptameric rings which stack back to back to give a disk-like structure with a central cavity, resembling the structure of eukaryotic proteasomes.

It is found in the cytoplasm. It carries out the reaction Hydrolysis of proteins to small peptides in the presence of ATP and magnesium. alpha-casein is the usual test substrate. In the absence of ATP, only oligopeptides shorter than five residues are hydrolyzed (such as succinyl-Leu-Tyr-|-NHMec, and Leu-Tyr-Leu-|-Tyr-Trp, in which cleavage of the -Tyr-|-Leu- and -Tyr-|-Trp bonds also occurs).. Functionally, cleaves peptides in various proteins in a process that requires ATP hydrolysis. Has a chymotrypsin-like activity. Plays a major role in the degradation of misfolded proteins. This chain is ATP-dependent Clp protease proteolytic subunit 2, found in Bifidobacterium longum (strain NCC 2705).